The chain runs to 592 residues: Potassium-transporting ATPase potassium-binding subunit (592 aa).

The next 11 membrane-spanning stretches (helical) occupy residues 7 to 27, 71 to 91, 136 to 156, 179 to 199, 287 to 307, 314 to 334, 411 to 431, 449 to 469, 473 to 493, 515 to 535, and 559 to 579; these read LQTVLLFVVLLAMVKPLGTFM, VLFNLVIFATLFAMLMLQHLL, GLTVHNFVSAATGIAVAIAVI, LYILVPISLIAALVLVSQGVI, LEILLILLIPFSLTYTFGAMV, WTLLGVMLLILLASFAVLQGV, GLYTMLAFAVIAVFVSGLMIG, SVVTVLAAGVMVLILSGIAMI, AVAAMANPGAHGLSEVLYAFA, ILGALAMIVGRFAPAVAVLAM, and FALWLTLVILIVGALTFFPAL.

This sequence belongs to the KdpA family. In terms of assembly, the system is composed of three essential subunits: KdpA, KdpB and KdpC.

The protein localises to the cell inner membrane. Its function is as follows. Part of the high-affinity ATP-driven potassium transport (or Kdp) system, which catalyzes the hydrolysis of ATP coupled with the electrogenic transport of potassium into the cytoplasm. This subunit binds the periplasmic potassium ions and delivers the ions to the membrane domain of KdpB through an intramembrane tunnel. The protein is Potassium-transporting ATPase potassium-binding subunit of Geobacter sulfurreducens (strain ATCC 51573 / DSM 12127 / PCA).